A 276-amino-acid chain; its full sequence is uncharacterized protein (276 aa).

Residues 20–137 (PVLIFIPGAN…PPINTFLPDS (118 aa)) enclose the AB hydrolase-1 domain. The interval 57–76 (GESELTEPLPDSASNPDSDY) is disordered.

The protein belongs to the AB hydrolase superfamily.

This is an uncharacterized protein from Staphylococcus aureus (strain USA300).